Here is a 403-residue protein sequence, read N- to C-terminus: Cysteine desulfurase IscS (403 aa).

Pyridoxal 5'-phosphate is bound by residues 73–74 (AT), N153, Q181, and 201–203 (SAH). K204 carries the N6-(pyridoxal phosphate)lysine modification. A pyridoxal 5'-phosphate-binding site is contributed by T241. C326 (cysteine persulfide intermediate) is an active-site residue. Residue C326 coordinates [2Fe-2S] cluster.

The protein belongs to the class-V pyridoxal-phosphate-dependent aminotransferase family. NifS/IscS subfamily. As to quaternary structure, homodimer. Forms a heterotetramer with IscU, interacts with other sulfur acceptors. Pyridoxal 5'-phosphate serves as cofactor.

It is found in the cytoplasm. The catalysed reaction is (sulfur carrier)-H + L-cysteine = (sulfur carrier)-SH + L-alanine. It functions in the pathway cofactor biosynthesis; iron-sulfur cluster biosynthesis. Its function is as follows. Master enzyme that delivers sulfur to a number of partners involved in Fe-S cluster assembly, tRNA modification or cofactor biosynthesis. Catalyzes the removal of elemental sulfur atoms from cysteine to produce alanine. Functions as a sulfur delivery protein for Fe-S cluster synthesis onto IscU, an Fe-S scaffold assembly protein, as well as other S acceptor proteins. This chain is Cysteine desulfurase IscS, found in Methylococcus capsulatus (strain ATCC 33009 / NCIMB 11132 / Bath).